Consider the following 368-residue polypeptide: Endophilin-A2 (368 aa).

The tract at residues 1–21 (MSVAGLKKQFYKASQLVSEKV) is membrane-binding amphipathic helix. Positions 18 to 249 (SEKVGGAEGT…LKRRMREASS (232 aa)) constitute a BAR domain. The tract at residues 60 to 87 (PNPASRAKLTMLNTVSKIRGQVKNPGYP) is required for dimerization upon membrane association. Residues 145-250 (NLCEKDLKEI…KRRMREASSR (106 aa)) are a coiled coil. Positions 218 to 254 (LVDAQLDYHRQAVQILDELAEKLKRRMREASSRPKRE) are interaction with ARC. The interval 244-308 (MREASSRPKR…PSRSMPPLDQ (65 aa)) is disordered. Residues 245-263 (REASSRPKREYKPKPREPF) show a composition bias toward basic and acidic residues. 2 positions are modified to phosphoserine: Ser-288 and Ser-292. Thr-298 is modified (phosphothreonine). The region spanning 306 to 365 (LDQPSCKALYDFEPENDGELGFHEGDVITLTNQIDENWYEGMLDGQSGFFPLSYVEVLVP) is the SH3 domain. Phosphotyrosine is present on Tyr-315.

This sequence belongs to the endophilin family. Interacts with ARC. Interacts with SYNJ1 and DNM1. Interacts with PDCD6IP. Interacts with BIN2. As to expression, ubiquitous. Higher expression in pancreas, placenta, prostate, testis and uterus.

The protein resides in the cytoplasm. The protein localises to the early endosome membrane. Its subcellular location is the cell projection. It localises to the podosome. Implicated in endocytosis. May recruit other proteins to membranes with high curvature. The sequence is that of Endophilin-A2 (SH3GL1) from Homo sapiens (Human).